Here is a 276-residue protein sequence, read N- to C-terminus: NADPH-dependent 7-cyano-7-deazaguanine reductase (276 aa).

A substrate-binding site is contributed by I83–S85. Position 85-86 (S85–K86) interacts with NADPH. The active-site Thioimide intermediate is the C184. D191 (proton donor) is an active-site residue. Substrate is bound at residue H223–E224. Residue R252–G253 participates in NADPH binding.

Belongs to the GTP cyclohydrolase I family. QueF type 2 subfamily. Homodimer.

Its subcellular location is the cytoplasm. It carries out the reaction 7-aminomethyl-7-carbaguanine + 2 NADP(+) = 7-cyano-7-deazaguanine + 2 NADPH + 3 H(+). Its pathway is tRNA modification; tRNA-queuosine biosynthesis. Functionally, catalyzes the NADPH-dependent reduction of 7-cyano-7-deazaguanine (preQ0) to 7-aminomethyl-7-deazaguanine (preQ1). The protein is NADPH-dependent 7-cyano-7-deazaguanine reductase of Pseudomonas entomophila (strain L48).